The chain runs to 404 residues: Cysteine desulfurase IscS (404 aa).

Pyridoxal 5'-phosphate contacts are provided by residues 75–76 (AT), asparagine 155, glutamine 183, and 203–205 (SAH). Residue lysine 206 is modified to N6-(pyridoxal phosphate)lysine. Threonine 243 lines the pyridoxal 5'-phosphate pocket. Cysteine 328 functions as the Cysteine persulfide intermediate in the catalytic mechanism. Cysteine 328 contributes to the [2Fe-2S] cluster binding site.

It belongs to the class-V pyridoxal-phosphate-dependent aminotransferase family. NifS/IscS subfamily. Homodimer. Forms a heterotetramer with IscU, interacts with other sulfur acceptors. Pyridoxal 5'-phosphate is required as a cofactor.

It localises to the cytoplasm. It catalyses the reaction (sulfur carrier)-H + L-cysteine = (sulfur carrier)-SH + L-alanine. It functions in the pathway cofactor biosynthesis; iron-sulfur cluster biosynthesis. Its function is as follows. Master enzyme that delivers sulfur to a number of partners involved in Fe-S cluster assembly, tRNA modification or cofactor biosynthesis. Catalyzes the removal of elemental sulfur atoms from cysteine to produce alanine. Functions as a sulfur delivery protein for Fe-S cluster synthesis onto IscU, an Fe-S scaffold assembly protein, as well as other S acceptor proteins. This Neisseria meningitidis serogroup A / serotype 4A (strain DSM 15465 / Z2491) protein is Cysteine desulfurase IscS.